The chain runs to 571 residues: Protein EARLY STARVATION 1, chloroplastic (571 aa).

Disordered stretches follow at residues 142–162 (RHSS…KDAG) and 215–254 (GSYR…TEHD). Residues 145–155 (SCSSQSLPQQQ) show a composition bias toward low complexity.

Belongs to the ESV1 family.

Its subcellular location is the plastid. The protein localises to the chloroplast stroma. Functionally, binds preferentially to highly ordered alpha-glucans, such as starch and crystalline maltodextrins. Involved in the organization of the starch granule matrix, thus influencing starch turnover by modulating the accessibility of starch polymers to modifying and degrading enzymes. Required for the control of starch degradation in leaves and starch distribution in nonphotosynthetic parts. Promotes gravitropic responses, negative in shoots but positive in roots, by facilitating starch granules (statoliths) formation in hypocotyls and roots columella. The sequence is that of Protein EARLY STARVATION 1, chloroplastic from Marchantia polymorpha (Common liverwort).